A 147-amino-acid chain; its full sequence is Diaminohydroxyphosphoribosylamino-pyrimidine deaminase (147 aa).

One can recognise a CMP/dCMP-type deaminase domain in the interval 1–122 (MKDRFYMTRA…LYLRKKGISV (122 aa)). H50 provides a ligand contact to Zn(2+). Residue E52 is the Proton donor of the active site. Residues C75 and C84 each contribute to the Zn(2+) site.

This sequence belongs to the cytidine and deoxycytidylate deaminase family. Zn(2+) is required as a cofactor.

It catalyses the reaction 2,5-diamino-6-hydroxy-4-(5-phosphoribosylamino)-pyrimidine + H2O + H(+) = 5-amino-6-(5-phospho-D-ribosylamino)uracil + NH4(+). It functions in the pathway cofactor biosynthesis; riboflavin biosynthesis; 5-amino-6-(D-ribitylamino)uracil from GTP: step 2/4. This is Diaminohydroxyphosphoribosylamino-pyrimidine deaminase (ribD1) from Buchnera aphidicola subsp. Schizaphis graminum (strain Sg).